Here is a 377-residue protein sequence, read N- to C-terminus: MRANCSSSSACPANSSEEELPVGLEVHGNLELVFTVVSTVMMGLLMFSLGCSVEIRKLWSHIRRPWGIAVGLLCQFGLMPFTAYLLAISFSLKPVQAIAVLIMGCCPGGTISNIFTFWVDGDMDLSISMTTCSTVAALGMMPLCIYLYTWSWSLQQNLTIPYQNIGITLVCLTIPVAFGVYVNYRWPKQSKIILKIGAVVGGVLLLVVAVAGVVLAKGSWNSDITLLTISFIFPLIGHVTGFLLALFTHQSWQRCRTISLETGAQNIQMCITMLQLSFTAEHLVQMLSFPLAYGLFQLIDGFLIVAAYQTYKRRLKNKHGKKNSGCTEVCHTRKSTSSRETNAFLEVNEEGAITPGPPGPMDCHRALEPVGHITSCE.

Over 1 to 29 (MRANCSSSSACPANSSEEELPVGLEVHGN) the chain is Extracellular. Asparagine 4 is a glycosylation site (N-linked (GlcNAc...) asparagine). The helical transmembrane segment at 30–50 (LELVFTVVSTVMMGLLMFSLG) threads the bilayer. At 51–67 (CSVEIRKLWSHIRRPWG) the chain is on the cytoplasmic side. The helical transmembrane segment at 68-88 (IAVGLLCQFGLMPFTAYLLAI) threads the bilayer. The Extracellular segment spans residues 89–97 (SFSLKPVQA). The chain crosses the membrane as a helical span at residues 98–118 (IAVLIMGCCPGGTISNIFTFW). Over 119–133 (VDGDMDLSISMTTCS) the chain is Cytoplasmic. Residues 134-154 (TVAALGMMPLCIYLYTWSWSL) traverse the membrane as a helical segment. Over 155-159 (QQNLT) the chain is Extracellular. N-linked (GlcNAc...) asparagine glycosylation occurs at asparagine 157. The helical transmembrane segment at 160–180 (IPYQNIGITLVCLTIPVAFGV) threads the bilayer. The Cytoplasmic segment spans residues 181–195 (YVNYRWPKQSKIILK). Residues 196 to 216 (IGAVVGGVLLLVVAVAGVVLA) traverse the membrane as a helical segment. Over 217–226 (KGSWNSDITL) the chain is Extracellular. The chain crosses the membrane as a helical span at residues 227 to 247 (LTISFIFPLIGHVTGFLLALF). Over 248–266 (THQSWQRCRTISLETGAQN) the chain is Cytoplasmic. The helical transmembrane segment at 267 to 285 (IQMCITMLQLSFTAEHLVQ) threads the bilayer. The Extracellular segment spans residues 286-290 (MLSFP). Residues 291–311 (LAYGLFQLIDGFLIVAAYQTY) form a helical membrane-spanning segment. The Cytoplasmic portion of the chain corresponds to 312-377 (KRRLKNKHGK…EPVGHITSCE (66 aa)).

This sequence belongs to the bile acid:sodium symporter (BASS) (TC 2.A.28) family. Glycosylated. In terms of tissue distribution, highly expressed in testis, placenta and pancreas. Moderately expressed in heart, lung and mammary gland. Weakly expressed in brain, colon, kidney, liver, ovary, prostate, small intestine, spleen and thymus.

It localises to the membrane. The enzyme catalyses estrone 3-sulfate(out) + 2 Na(+)(out) = estrone 3-sulfate(in) + 2 Na(+)(in). The catalysed reaction is 17beta-estradiol 3-sulfate(out) + 2 Na(+)(out) = 17beta-estradiol 3-sulfate(in) + 2 Na(+)(in). It catalyses the reaction dehydroepiandrosterone 3-sulfate(out) + 2 Na(+)(out) = dehydroepiandrosterone 3-sulfate(in) + 2 Na(+)(in). It carries out the reaction androst-5-ene-diol 3-sulfate(out) + 2 Na(+)(out) = androst-5-ene-diol 3-sulfate(in) + 2 Na(+)(in). The enzyme catalyses pregnenolone sulfate(out) + 2 Na(+)(out) = pregnenolone sulfate(in) + 2 Na(+)(in). The catalysed reaction is taurolithocholate 3-sulfate(out) + 2 Na(+)(out) = taurolithocholate 3-sulfate(in) + 2 Na(+)(in). It catalyses the reaction androsterone 3alpha-sulfate(out) + 2 Na(+)(out) = androsterone 3alpha-sulfate(in) + 2 Na(+)(in). It carries out the reaction 5alpha-dihydrotestosterone sulfate(out) + 2 Na(+)(out) = 5alpha-dihydrotestosterone sulfate(in) + 2 Na(+)(in). The enzyme catalyses 17beta-estradiol 17-sulfate(out) + 2 Na(+)(out) = 17beta-estradiol 17-sulfate(in) + 2 Na(+)(in). The catalysed reaction is 17alpha-hydroxypregnenolone 3-sulfate(out) + 2 Na(+)(out) = 17alpha-hydroxypregnenolone 3-sulfate(in) + 2 Na(+)(in). It catalyses the reaction epiandrosterone 3-sulfate(out) + 2 Na(+)(out) = epiandrosterone 3-sulfate(in) + 2 Na(+)(in). It carries out the reaction epitestosterone 17-sulfate(out) + 2 Na(+)(out) = epitestosterone 17-sulfate(in) + 2 Na(+)(in). The enzyme catalyses testosterone 17-sulfate(out) + 2 Na(+)(out) = testosterone 17-sulfate(in) + 2 Na(+)(in). The catalysed reaction is 16alpha-hydroxydehydroepiandrosterone 3-sulfate(out) + 2 Na(+)(out) = 16alpha-hydroxydehydroepiandrosterone 3-sulfate(in) + 2 Na(+)(in). Its function is as follows. Transports sulfoconjugated steroid hormones from the extracellular compartment into the cytosol in a sodium-dependent manner without hydrolysis. Steroid sulfate hormones are commonly considered to be biologically inactive metabolites, that may be activated by steroid sulfatases into free steroids. May play an important role by delivering sulfoconjugated steroids to specific target cells in reproductive organs. May play a role transporting the estriol precursor 16alpha-hydroxydehydroepiandrosterone 3-sulfate (16a-OH-DHEAS) at the fetal blood vessel endothelium. Can also transport other sulfoconjugated molecules such as taurolithocholic acid-3-sulfate and sulfoconjugated pyrenes. This Homo sapiens (Human) protein is Sodium-dependent organic anion transporter (SLC10A6).